The chain runs to 147 residues: Spermidine export protein MdtJ (147 aa).

A run of 4 helical transmembrane segments spans residues 1–21, 31–51, 54–74, and 81–101; these read MIYW…TLSM, TGHI…SLAV, VALG…ITIF, and ETLS…ILLV. Residues 105 to 147 form a disordered region; it reads TRKPKQPNCHRGNRPPSVQELKTQTTGHHKGVAVESGEHHAAA.

The protein belongs to the drug/metabolite transporter (DMT) superfamily. Small multidrug resistance (SMR) (TC 2.A.7.1) family. MdtJ subfamily. As to quaternary structure, forms a complex with MdtI.

It is found in the cell inner membrane. Catalyzes the excretion of spermidine. The polypeptide is Spermidine export protein MdtJ (Yersinia pestis bv. Antiqua (strain Antiqua)).